A 316-amino-acid chain; its full sequence is Retinol dehydrogenase 12 (316 aa).

46–52 serves as a coordination point for NADP(+); the sequence is GANTGIG. Serine 175 contributes to the substrate binding site. Catalysis depends on tyrosine 200, which acts as the Proton acceptor.

The protein belongs to the short-chain dehydrogenases/reductases (SDR) family. Expressed in the retina.

The enzyme catalyses all-trans-retinol + NADP(+) = all-trans-retinal + NADPH + H(+). It catalyses the reaction 11-cis-retinol + NADP(+) = 11-cis-retinal + NADPH + H(+). It carries out the reaction 9-cis-retinol + NADP(+) = 9-cis-retinal + NADPH + H(+). The catalysed reaction is a 4-hydroxynonen-1-ol + NADP(+) = a 4-hydroxynonenal + NADPH + H(+). The enzyme catalyses (E)-non-2-en-1-ol + NADP(+) = (E)-non-2-enal + NADPH + H(+). It catalyses the reaction (Z)-non-6-en-1-ol + NADP(+) = (Z)-non-6-enal + NADPH + H(+). It carries out the reaction nonan-1-ol + NADP(+) = nonanal + NADPH + H(+). It functions in the pathway cofactor metabolism; retinol metabolism. Its function is as follows. Retinoids dehydrogenase/reductase with a clear preference for NADP. Displays high activity towards 9-cis, 11-cis and all-trans-retinal. Shows very weak activity towards 13-cis-retinol. Also exhibits activity, albeit with lower affinity than for retinaldehydes, towards lipid peroxidation products (C9 aldehydes) such as 4-hydroxynonenal and trans-2-nonenal. May play an important function in photoreceptor cells to detoxify 4-hydroxynonenal and potentially other toxic aldehyde products resulting from lipid peroxidation. Has no dehydrogenase activity towards steroids. The polypeptide is Retinol dehydrogenase 12 (RDH12) (Bos taurus (Bovine)).